Consider the following 204-residue polypeptide: Casparian strip membrane protein 2 (204 aa).

The Cytoplasmic portion of the chain corresponds to 1–42 (MKNESTTIDVPAESSSAMKGKAPLIGVARDHTTSGSGGYNRG). Residues 43-63 (LSIFDFLLRLAAIVAALAAAA) traverse the membrane as a helical segment. Topologically, residues 64 to 92 (TMGTSDETLPFFTQFLQFEASYDDLPTFQ) are extracellular. The chain crosses the membrane as a helical span at residues 93–113 (FFVIAMALVGGYLVLSLPISV). Over 114–125 (VTILRPLATAPR) the chain is Cytoplasmic. A helical membrane pass occupies residues 126–146 (LLLLVLDTAVLALNTAAASSA). Residues 147–178 (AAISYLAHSGNQNTNWLPICQQFGDFCQKSSG) are Extracellular-facing. The helical transmembrane segment at 179 to 199 (AVVSAFISVVFFTILVVISGV) threads the bilayer. Residues 200 to 204 (ALKRH) lie on the Cytoplasmic side of the membrane.

This sequence belongs to the Casparian strip membrane proteins (CASP) family. Homodimer and heterodimers.

It localises to the cell membrane. Functionally, regulates membrane-cell wall junctions and localized cell wall deposition. Required for establishment of the Casparian strip membrane domain (CSD) and the subsequent formation of Casparian strips, a cell wall modification of the root endodermis that determines an apoplastic barrier between the intraorganismal apoplasm and the extraorganismal apoplasm and prevents lateral diffusion. In Arabidopsis lyrata subsp. lyrata (Lyre-leaved rock-cress), this protein is Casparian strip membrane protein 2.